The primary structure comprises 765 residues: Spastin (765 aa).

The tract at residues 1-94 is disordered; sequence MVRTKNQSSS…TSGYGPRGGT (94 aa). Topologically, residues 1–107 are cytoplasmic; it reads MVRTKNQSSS…KQNLYVVSFP (107 aa). The segment at 1-195 is required for localization to punctate cytoplasmic foci; the sequence is MVRTKNQSSS…ALLPLEMATN (195 aa). Low complexity predominate over residues 8–19; that stretch reads SSSSSASSSTKS. Residues 48-58 show a composition bias toward polar residues; the sequence is SSKLSSNRQRA. The segment covering 59-72 has biased composition (low complexity); that stretch reads TITTTTTSTTPGSS. Residues 108–128 constitute an intramembrane region (helical); it reads IIFLFNVLRSLIYQLFCIFRY. Residues 129–765 lie on the Cytoplasmic side of the membrane; it reads LYCASTKVIY…WSQDYGDITI (637 aa). Residues 193–765 are sufficient for interaction with microtubules and microtubule severing; it reads ATNRGGSGGY…WSQDYGDITI (573 aa). In terms of domain architecture, MIT spans 218-293; sequence HRRAFEYISK…SMARDRLHFL (76 aa). Residues 329 to 462 are disordered; it reads QTNSKAAAVE…GSGSGASTPM (134 aa). A compositionally biased stretch (low complexity) spans 355–364; it reads SGTGSSAGTS. Composition is skewed to polar residues over residues 389–407 and 428–444; these read NKSQ…STSV and QFSS…RTPI. Positions 446–462 are required for interaction with microtubules; it reads NNAASGSGSGSGASTPM. 530 to 537 is a binding site for ATP; the sequence is GPPGNGKT.

The protein belongs to the AAA ATPase family. Spastin subfamily. As to quaternary structure, homohexamer. The homohexamer is stabilized by ATP-binding. The homohexamer may adopt a ring conformation through which microtubules pass prior to being severed. Interacts with microtubules. Interacts with atl; may be involved in microtubule dynamics.

It is found in the membrane. The protein localises to the cytoplasm. Its subcellular location is the cytoskeleton. It localises to the microtubule organizing center. The protein resides in the centrosome. It is found in the chromosome. The protein localises to the lipid droplet. The catalysed reaction is n ATP + n H2O + a microtubule = n ADP + n phosphate + (n+1) alpha/beta tubulin heterodimers.. Its function is as follows. ATP-dependent microtubule severing protein. Stimulates microtubule minus-end depolymerization and poleward microtubule flux in the mitotic spindle. Regulates microtubule stability in the neuromuscular junction synapse. Involved in lipid metabolism by regulating the size and distribution of lipid droplets. Involved in axon regeneration by regulating microtubule severing. The polypeptide is Spastin (Drosophila mojavensis (Fruit fly)).